The chain runs to 298 residues: GTPase Era (298 aa).

The Era-type G domain maps to 3–170 (KSGFVAILGR…VQLLKDNLEE (168 aa)). The G1 stretch occupies residues 11–18 (GRPNVGKS). Position 11–18 (11–18 (GRPNVGKS)) interacts with GTP. Residues 37-41 (QTTRN) form a G2 region. The G3 stretch occupies residues 58–61 (DTPG). GTP is bound by residues 58-62 (DTPGI) and 120-123 (NKID). The tract at residues 120 to 123 (NKID) is G4. Positions 149–151 (ISA) are G5. The KH type-2 domain maps to 201–279 (TQQEVPHSVA…YLETWVKVKK (79 aa)).

This sequence belongs to the TRAFAC class TrmE-Era-EngA-EngB-Septin-like GTPase superfamily. Era GTPase family. Monomer.

It is found in the cytoplasm. It localises to the cell membrane. Functionally, an essential GTPase that binds both GDP and GTP, with rapid nucleotide exchange. Plays a role in 16S rRNA processing and 30S ribosomal subunit biogenesis and possibly also in cell cycle regulation and energy metabolism. The protein is GTPase Era of Streptococcus equi subsp. zooepidemicus (strain MGCS10565).